The sequence spans 160 residues: Mediator of RNA polymerase II transcription subunit 31 (160 aa).

The interval 124–160 (GTGIENEQGGTEANNPGEAEGEQTKGTADQQDGSSKT) is disordered. Over residues 147–160 (TKGTADQQDGSSKT) the composition is skewed to polar residues.

The protein belongs to the Mediator complex subunit 31 family. As to quaternary structure, component of the Mediator complex.

The protein localises to the nucleus. Functionally, component of the Mediator complex, a coactivator involved in the regulated transcription of nearly all RNA polymerase II-dependent genes. Mediator functions as a bridge to convey information from gene-specific regulatory proteins to the basal RNA polymerase II transcription machinery. Mediator is recruited to promoters by direct interactions with regulatory proteins and serves as a scaffold for the assembly of a functional preinitiation complex with RNA polymerase II and the general transcription factors. In Aspergillus terreus (strain NIH 2624 / FGSC A1156), this protein is Mediator of RNA polymerase II transcription subunit 31 (soh1).